The primary structure comprises 229 residues: Enolase-phosphatase E1 (229 aa).

The protein belongs to the HAD-like hydrolase superfamily. MasA/MtnC family. As to quaternary structure, monomer. The cofactor is Mg(2+).

The catalysed reaction is 5-methylsulfanyl-2,3-dioxopentyl phosphate + H2O = 1,2-dihydroxy-5-(methylsulfanyl)pent-1-en-3-one + phosphate. It participates in amino-acid biosynthesis; L-methionine biosynthesis via salvage pathway; L-methionine from S-methyl-5-thio-alpha-D-ribose 1-phosphate: step 3/6. It functions in the pathway amino-acid biosynthesis; L-methionine biosynthesis via salvage pathway; L-methionine from S-methyl-5-thio-alpha-D-ribose 1-phosphate: step 4/6. In terms of biological role, bifunctional enzyme that catalyzes the enolization of 2,3-diketo-5-methylthiopentyl-1-phosphate (DK-MTP-1-P) into the intermediate 2-hydroxy-3-keto-5-methylthiopentenyl-1-phosphate (HK-MTPenyl-1-P), which is then dephosphorylated to form the acireductone 1,2-dihydroxy-3-keto-5-methylthiopentene (DHK-MTPene). The polypeptide is Enolase-phosphatase E1 (Enterobacter sp. (strain 638)).